The following is a 309-amino-acid chain: Ornithine carbamoyltransferase (309 aa).

Residues 56 to 59 (STRT), glutamine 83, arginine 107, and 134 to 137 (HPCQ) contribute to the carbamoyl phosphate site. L-ornithine-binding positions include asparagine 165, aspartate 223, and 227–228 (SM). Residues 263–264 (CL) and arginine 291 each bind carbamoyl phosphate.

It belongs to the aspartate/ornithine carbamoyltransferase superfamily. OTCase family.

It localises to the cytoplasm. It carries out the reaction carbamoyl phosphate + L-ornithine = L-citrulline + phosphate + H(+). The protein operates within amino-acid biosynthesis; L-arginine biosynthesis; L-arginine from L-ornithine and carbamoyl phosphate: step 1/3. Reversibly catalyzes the transfer of the carbamoyl group from carbamoyl phosphate (CP) to the N(epsilon) atom of ornithine (ORN) to produce L-citrulline. This is Ornithine carbamoyltransferase from Burkholderia mallei (strain ATCC 23344).